The sequence spans 142 residues: Large ribosomal subunit protein bL17 (142 aa).

Belongs to the bacterial ribosomal protein bL17 family. As to quaternary structure, part of the 50S ribosomal subunit. Contacts protein L32.

The chain is Large ribosomal subunit protein bL17 from Bartonella henselae (strain ATCC 49882 / DSM 28221 / CCUG 30454 / Houston 1) (Rochalimaea henselae).